Consider the following 496-residue polypeptide: Lysine--tRNA ligase (496 aa).

Glutamate 409 and glutamate 416 together coordinate Mg(2+).

This sequence belongs to the class-II aminoacyl-tRNA synthetase family. Homodimer. It depends on Mg(2+) as a cofactor.

The protein localises to the cytoplasm. The catalysed reaction is tRNA(Lys) + L-lysine + ATP = L-lysyl-tRNA(Lys) + AMP + diphosphate. This chain is Lysine--tRNA ligase, found in Streptococcus mutans serotype c (strain ATCC 700610 / UA159).